Reading from the N-terminus, the 405-residue chain is Amino sugar nitrososynthase DnmZ (405 aa).

Residues E117 and R332 each coordinate dTDP.

Belongs to the acyl-CoA dehydrogenase family. Homotetramer. FAD is required as a cofactor.

It functions in the pathway antibiotic biosynthesis. In terms of biological role, nitrososynthase involved in the biosynthesis of baumycin. Catalyzes the double-oxidation of TDP-L-epi-vancosamine to TDP-L-epi-vancosonitrose. The rapid turnover of TDP-L-epi-vancosamine suggests that this compound, or a closely related analog, is the natural substrate for DnmZ. Can also catalyze the double-oxidation of TDP-L-evernosamine to TDP-L-evernitrosose. This chain is Amino sugar nitrososynthase DnmZ, found in Streptomyces peucetius.